A 39-amino-acid chain; its full sequence is Photosystem II reaction center protein X (39 aa).

The helical transmembrane segment at 10–30 threads the bilayer; the sequence is SSLVWAAVIVVIPAAVALVLI.

Belongs to the PsbX family. Type 1 subfamily. In terms of assembly, PSII is composed of 1 copy each of membrane proteins PsbA, PsbB, PsbC, PsbD, PsbE, PsbF, PsbH, PsbI, PsbJ, PsbK, PsbL, PsbM, PsbT, PsbX, PsbY, Psb30/Ycf12, peripheral proteins PsbO, CyanoQ (PsbQ), PsbU, PsbV and a large number of cofactors. It forms dimeric complexes.

Its subcellular location is the cellular thylakoid membrane. Functionally, involved in the binding and/or turnover of quinones at the Q(B) site of photosystem II (PSII). PSII is a light-driven water plastoquinone oxidoreductase, using light energy to abstract electrons from H(2)O, generating a proton gradient subsequently used for ATP formation. This chain is Photosystem II reaction center protein X, found in Prochlorococcus marinus (strain MIT 9303).